The chain runs to 94 residues: DNA-binding protein HU (94 aa).

Belongs to the bacterial histone-like protein family. Homodimer.

Functionally, histone-like DNA-binding protein which is capable of wrapping DNA to stabilize it, and thus to prevent its denaturation under extreme environmental conditions. It is essential for heterocyst differentiation. This is DNA-binding protein HU (hup) from Nostoc sp. (strain PCC 7120 / SAG 25.82 / UTEX 2576).